The chain runs to 186 residues: Protein GrpE (186 aa).

A compositionally biased stretch (polar residues) spans 1 to 13 (MSENTQPEQNQPL). Residues 1 to 22 (MSENTQPEQNQPLTGAPSPEEL) form a disordered region.

It belongs to the GrpE family. Homodimer.

It is found in the cytoplasm. In terms of biological role, participates actively in the response to hyperosmotic and heat shock by preventing the aggregation of stress-denatured proteins, in association with DnaK and GrpE. It is the nucleotide exchange factor for DnaK and may function as a thermosensor. Unfolded proteins bind initially to DnaJ; upon interaction with the DnaJ-bound protein, DnaK hydrolyzes its bound ATP, resulting in the formation of a stable complex. GrpE releases ADP from DnaK; ATP binding to DnaK triggers the release of the substrate protein, thus completing the reaction cycle. Several rounds of ATP-dependent interactions between DnaJ, DnaK and GrpE are required for fully efficient folding. This is Protein GrpE from Polaromonas sp. (strain JS666 / ATCC BAA-500).